A 216-amino-acid polypeptide reads, in one-letter code: Triosephosphate isomerase (216 aa).

Residue 7 to 9 coordinates substrate; the sequence is NLK. The Electrophile role is filled by His-89. The active-site Proton acceptor is Glu-137. Substrate-binding positions include Ile-142, Gly-175, and 196–197; that span reads AS.

This sequence belongs to the triosephosphate isomerase family. Homotetramer; dimer of dimers.

Its subcellular location is the cytoplasm. The enzyme catalyses D-glyceraldehyde 3-phosphate = dihydroxyacetone phosphate. Its pathway is carbohydrate biosynthesis; gluconeogenesis. The protein operates within carbohydrate degradation; glycolysis; D-glyceraldehyde 3-phosphate from glycerone phosphate: step 1/1. Involved in the gluconeogenesis. Catalyzes stereospecifically the conversion of dihydroxyacetone phosphate (DHAP) to D-glyceraldehyde-3-phosphate (G3P). In Thermoplasma acidophilum (strain ATCC 25905 / DSM 1728 / JCM 9062 / NBRC 15155 / AMRC-C165), this protein is Triosephosphate isomerase.